The primary structure comprises 670 residues: tRNA 5-methylaminomethyl-2-thiouridine biosynthesis bifunctional protein MnmC (670 aa).

Residues 1-242 form a tRNA (mnm(5)s(2)U34)-methyltransferase region; sequence MTFSVQHAEI…KRECLSGLKI (242 aa). Positions 269 to 670 are FAD-dependent cmnm(5)s(2)U34 oxidoreductase; the sequence is IGGGIASLCA…KKWLKGSKVE (402 aa).

This sequence in the N-terminal section; belongs to the methyltransferase superfamily. tRNA (mnm(5)s(2)U34)-methyltransferase family. The protein in the C-terminal section; belongs to the DAO family. It depends on FAD as a cofactor.

The protein resides in the cytoplasm. It carries out the reaction 5-aminomethyl-2-thiouridine(34) in tRNA + S-adenosyl-L-methionine = 5-methylaminomethyl-2-thiouridine(34) in tRNA + S-adenosyl-L-homocysteine + H(+). Catalyzes the last two steps in the biosynthesis of 5-methylaminomethyl-2-thiouridine (mnm(5)s(2)U) at the wobble position (U34) in tRNA. Catalyzes the FAD-dependent demodification of cmnm(5)s(2)U34 to nm(5)s(2)U34, followed by the transfer of a methyl group from S-adenosyl-L-methionine to nm(5)s(2)U34, to form mnm(5)s(2)U34. In Haemophilus influenzae (strain PittEE), this protein is tRNA 5-methylaminomethyl-2-thiouridine biosynthesis bifunctional protein MnmC.